A 310-amino-acid polypeptide reads, in one-letter code: HPr kinase/phosphorylase (310 aa).

Active-site residues include histidine 138 and lysine 159. Residue glycine 153–serine 160 coordinates ATP. Serine 160 contacts Mg(2+). The active-site Proton acceptor; for phosphorylation activity. Proton donor; for dephosphorylation activity is the aspartate 177. An important for the catalytic mechanism of both phosphorylation and dephosphorylation region spans residues leucine 201–aspartate 210. Glutamate 202 provides a ligand contact to Mg(2+). The active site involves arginine 243. Positions proline 264–arginine 269 are important for the catalytic mechanism of dephosphorylation.

This sequence belongs to the HPrK/P family. In terms of assembly, homohexamer. The cofactor is Mg(2+).

The catalysed reaction is [HPr protein]-L-serine + ATP = [HPr protein]-O-phospho-L-serine + ADP + H(+). It carries out the reaction [HPr protein]-O-phospho-L-serine + phosphate + H(+) = [HPr protein]-L-serine + diphosphate. Its function is as follows. Catalyzes the ATP- as well as the pyrophosphate-dependent phosphorylation of a specific serine residue in HPr, a phosphocarrier protein of the phosphoenolpyruvate-dependent sugar phosphotransferase system (PTS). HprK/P also catalyzes the pyrophosphate-producing, inorganic phosphate-dependent dephosphorylation (phosphorolysis) of seryl-phosphorylated HPr (P-Ser-HPr). The two antagonistic activities of HprK/P are regulated by several intracellular metabolites, which change their concentration in response to the absence or presence of rapidly metabolisable carbon sources (glucose, fructose, etc.) in the growth medium. Therefore, by controlling the phosphorylation state of HPr, HPrK/P is a sensor enzyme that plays a major role in the regulation of carbon metabolism and sugar transport: it mediates carbon catabolite repression (CCR), and regulates PTS-catalyzed carbohydrate uptake and inducer exclusion. This Streptococcus pyogenes serotype M1 protein is HPr kinase/phosphorylase (hprK).